We begin with the raw amino-acid sequence, 365 residues long: Terpene cyclase DEP1 (365 aa).

8 helical membrane-spanning segments follow: residues 10–30 (LYLSALGVWGLWGYAYFNGMF), 82–102 (LLFFDINYAVACTNLWTLIES), 116–136 (AWAMVLCNANGAAIVLPIYLY), 158–178 (LPIITVVMLLQPLLIFAPAWF), 188–208 (ALIALFQVAPVIVLGLYVGIT), 233–253 (LILAGSVASAVHIYTLTGALF), 297–317 (LFSQWDWIVVCLTSVVYAQLL), and 338–358 (MIYLTIATVVLGPGGAGSFAL).

This sequence belongs to the membrane-bound ascI terpene cyclase family.

It localises to the membrane. Its pathway is polyketide biosynthesis. Part of the gene cluster that mediates the biosynthesis of depudecin, a highly oxidized eleven-carbon linear polyketide that acts as a histone deacetylase (HDAC) inhibitor and makes a small contribution to pathogenesis. The reducing polyketide synthase DEP5 is the central enzyme in depudecin biosynthesis by yielding the backbone polyketide chain. The monooxygenases DEP2 and DEP4, as well as the uncharacterized protein DEP1, then act as tailoring enzymes to modify the intermediate polyketide chain into depudecin. This chain is Terpene cyclase DEP1, found in Fusarium langsethiae.